We begin with the raw amino-acid sequence, 142 residues long: Glia maturation factor gamma (142 aa).

Ser-2 bears the N-acetylserine mark. Residues 4–139 form the ADF-H domain; that stretch reads SLVVCDVDPE…NETWLKEKLA (136 aa).

The protein belongs to the actin-binding proteins ADF family. GMF subfamily. In terms of tissue distribution, expressed in rat thymus, testis, and spleen. Is present predominantly in proliferative and differentiative organs.

The sequence is that of Glia maturation factor gamma (Gmfg) from Rattus norvegicus (Rat).